A 201-amino-acid chain; its full sequence is Pyridoxine/pyridoxamine 5'-phosphate oxidase (201 aa).

FMN-binding positions include 49–54, 64–65, lysine 71, and glutamine 93; these read RMVLLK and YT. Residue lysine 54 participates in substrate binding. The substrate site is built by tyrosine 111, arginine 115, and serine 119. Residues 128-129 and tryptophan 172 each bind FMN; that span reads QS. Residue 178–180 participates in substrate binding; it reads RLH. Residue arginine 182 participates in FMN binding.

The protein belongs to the pyridoxamine 5'-phosphate oxidase family. Homodimer. The cofactor is FMN.

The catalysed reaction is pyridoxamine 5'-phosphate + O2 + H2O = pyridoxal 5'-phosphate + H2O2 + NH4(+). The enzyme catalyses pyridoxine 5'-phosphate + O2 = pyridoxal 5'-phosphate + H2O2. The protein operates within cofactor metabolism; pyridoxal 5'-phosphate salvage; pyridoxal 5'-phosphate from pyridoxamine 5'-phosphate: step 1/1. Its pathway is cofactor metabolism; pyridoxal 5'-phosphate salvage; pyridoxal 5'-phosphate from pyridoxine 5'-phosphate: step 1/1. Its function is as follows. Catalyzes the oxidation of either pyridoxine 5'-phosphate (PNP) or pyridoxamine 5'-phosphate (PMP) into pyridoxal 5'-phosphate (PLP). This is Pyridoxine/pyridoxamine 5'-phosphate oxidase from Roseobacter denitrificans (strain ATCC 33942 / OCh 114) (Erythrobacter sp. (strain OCh 114)).